Here is a 335-residue protein sequence, read N- to C-terminus: MIQFQRLHKSYTVDGRQIVALHPLDLRIGPGEVFGIIGHSGAGKSTLIRLINRLEEPTGGRLLIGDEDVTALNSTGLRALRRRVGMIFQHFNLLSSRTVAGNVAFPLELAGTPRAEIDARVAELLARVGLEQHATKYPAQLSGGQKQRVGIARALATRPQILLCDEATSALDPQTTASVLQLLAQINRELGLTIVLITHEMEVIRRVCDRVAVLDAGKLVETGPVTEVFLHPQHPTTRRFVSEAEHVDEAELHRDFEAVGGRIVRLTFLGNGTYEPVLGRIARETGVDYNILSGRVDRIKDTPYGQLTVALTGGDQNAARAGFVAAGVHVEDLRV.

Positions 2-241 constitute an ABC transporter domain; the sequence is IQFQRLHKSY…PQHPTTRRFV (240 aa). 38-45 is an ATP binding site; sequence GHSGAGKS.

The protein belongs to the ABC transporter superfamily. Methionine importer (TC 3.A.1.24) family. The complex is composed of two ATP-binding proteins (MetN), two transmembrane proteins (MetI) and a solute-binding protein (MetQ).

It localises to the cell inner membrane. The catalysed reaction is L-methionine(out) + ATP + H2O = L-methionine(in) + ADP + phosphate + H(+). It carries out the reaction D-methionine(out) + ATP + H2O = D-methionine(in) + ADP + phosphate + H(+). Functionally, part of the ABC transporter complex MetNIQ involved in methionine import. Responsible for energy coupling to the transport system. The sequence is that of Methionine import ATP-binding protein MetN from Xanthomonas campestris pv. campestris (strain 8004).